Reading from the N-terminus, the 383-residue chain is MDALEITQKLISYPTITPKECGIFEYIKSLFPTFKTLECGENGVKNLFLYRIFNPPKEHTEEKHAKESVKPLHFCFAGHIDVVPPGNHWQSDPFKPIIKEGFLYGRGAQDMKGGVGAFLSASLNFNPKTPFMLSVLLTSDEEGPGIFGTRLMLEKLKEKDLLPHMAIVAEPTCEKILGDSIKIGRRGSINGKLILKGTQGHVAYPQKCQNPIDALASVLPLISGVHLDDGDEYFDPSKLVITNLHAGLGANNVTPASVEIIFNARHSLKTTKESLKEYLEKVLKNAPHTLELESSSSPFITASHSKLASVLKENILKTCHTTPLLNTKGGTSDARFFSAHGIEVVEFGVINDRIHAIDERVSLKELELLEKVFLGVLENLSEK.

A Zn(2+)-binding site is contributed by His-79. The active site involves Asp-81. Asp-110 contacts Zn(2+). Catalysis depends on Glu-141, which acts as the Proton acceptor. Residues Glu-142, Glu-170, and His-355 each contribute to the Zn(2+) site.

The protein belongs to the peptidase M20A family. DapE subfamily. In terms of assembly, homodimer. It depends on Zn(2+) as a cofactor. Co(2+) is required as a cofactor.

It catalyses the reaction N-succinyl-(2S,6S)-2,6-diaminopimelate + H2O = (2S,6S)-2,6-diaminopimelate + succinate. The protein operates within amino-acid biosynthesis; L-lysine biosynthesis via DAP pathway; LL-2,6-diaminopimelate from (S)-tetrahydrodipicolinate (succinylase route): step 3/3. Functionally, catalyzes the hydrolysis of N-succinyl-L,L-diaminopimelic acid (SDAP), forming succinate and LL-2,6-diaminopimelate (DAP), an intermediate involved in the bacterial biosynthesis of lysine and meso-diaminopimelic acid, an essential component of bacterial cell walls. The protein is Succinyl-diaminopimelate desuccinylase of Helicobacter pylori (strain Shi470).